The following is a 431-amino-acid chain: tRNA(Ile)-lysidine synthase (431 aa).

Position 19–24 (19–24) interacts with ATP; sequence STGIDS.

The protein belongs to the tRNA(Ile)-lysidine synthase family.

It is found in the cytoplasm. The enzyme catalyses cytidine(34) in tRNA(Ile2) + L-lysine + ATP = lysidine(34) in tRNA(Ile2) + AMP + diphosphate + H(+). Functionally, ligates lysine onto the cytidine present at position 34 of the AUA codon-specific tRNA(Ile) that contains the anticodon CAU, in an ATP-dependent manner. Cytidine is converted to lysidine, thus changing the amino acid specificity of the tRNA from methionine to isoleucine. This Staphylococcus aureus (strain COL) protein is tRNA(Ile)-lysidine synthase.